The chain runs to 117 residues: Large ribosomal subunit protein uL18 (117 aa).

The protein belongs to the universal ribosomal protein uL18 family. In terms of assembly, part of the 50S ribosomal subunit; part of the 5S rRNA/L5/L18/L25 subcomplex. Contacts the 5S and 23S rRNAs.

This is one of the proteins that bind and probably mediate the attachment of the 5S RNA into the large ribosomal subunit, where it forms part of the central protuberance. The protein is Large ribosomal subunit protein uL18 of Hydrogenovibrio crunogenus (strain DSM 25203 / XCL-2) (Thiomicrospira crunogena).